The sequence spans 159 residues: MISLIAALAVDRVIGMENAMPWDLPADLAWFKRNTLNKPVVMGRLTWESIGRPLPGRKNIVISSKPGSDDRVQWVKSVDEAIAACGDAEEIMVIGGGRVYEQFLPKAHKLYLTHIDAEVEGDTHFPDYDPDEWESVFSEFHDADAQNSHSYCFEILERR.

The region spanning 1–158 (MISLIAALAV…HSYCFEILER (158 aa)) is the DHFR domain. I5 provides a ligand contact to substrate. NADP(+) is bound by residues A7 and 13–19 (VIGMENA). Residue D27 participates in substrate binding. Position 45-46 (45-46 (LT)) interacts with NADP(+). The substrate site is built by R52 and R57. NADP(+)-binding positions include 63 to 64 (SS), K76, and 95 to 102 (GGGRVYEQ). Residue T113 coordinates substrate.

It belongs to the dihydrofolate reductase family.

The catalysed reaction is (6S)-5,6,7,8-tetrahydrofolate + NADP(+) = 7,8-dihydrofolate + NADPH + H(+). Its pathway is cofactor biosynthesis; tetrahydrofolate biosynthesis; 5,6,7,8-tetrahydrofolate from 7,8-dihydrofolate: step 1/1. Key enzyme in folate metabolism. Catalyzes an essential reaction for de novo glycine and purine synthesis, and for DNA precursor synthesis. The chain is Dihydrofolate reductase (folA) from Klebsiella aerogenes (Enterobacter aerogenes).